A 287-amino-acid chain; its full sequence is U-megalopygitoxin(8)-Mo12 (287 aa).

Residues 1–17 (MNLQYLILSLLSTTVYG) form the signal peptide. Histidine amide is present on His-284.

Belongs to the megalysin family. Post-translationally, contains 2 disulfide bonds. As to expression, expressed by the venom apparatus.

It localises to the secreted. Its subcellular location is the target cell membrane. In terms of biological role, may function as a large pore-forming protein. This is U-megalopygitoxin(8)-Mo12 from Megalopyge opercularis (Southern flannel moth).